The primary structure comprises 102 residues: NADH-quinone oxidoreductase subunit K (102 aa).

3 consecutive transmembrane segments (helical) span residues 6–26 (LIGI…GVLA), 30–50 (MLFQ…GFIA), and 63–83 (MFIL…ALFL).

The protein belongs to the complex I subunit 4L family. As to quaternary structure, NDH-1 is composed of 14 different subunits. Subunits NuoA, H, J, K, L, M, N constitute the membrane sector of the complex.

It is found in the cell inner membrane. The enzyme catalyses a quinone + NADH + 5 H(+)(in) = a quinol + NAD(+) + 4 H(+)(out). Its function is as follows. NDH-1 shuttles electrons from NADH, via FMN and iron-sulfur (Fe-S) centers, to quinones in the respiratory chain. The immediate electron acceptor for the enzyme in this species is believed to be ubiquinone. Couples the redox reaction to proton translocation (for every two electrons transferred, four hydrogen ions are translocated across the cytoplasmic membrane), and thus conserves the redox energy in a proton gradient. In Rhodopseudomonas palustris (strain TIE-1), this protein is NADH-quinone oxidoreductase subunit K.